We begin with the raw amino-acid sequence, 224 residues long: Magnesium-protoporphyrin O-methyltransferase (224 aa).

It belongs to the class I-like SAM-binding methyltransferase superfamily. Magnesium protoporphyrin O-methyltransferase family.

It carries out the reaction Mg-protoporphyrin IX + S-adenosyl-L-methionine = Mg-protoporphyrin IX 13-monomethyl ester + S-adenosyl-L-homocysteine. It participates in porphyrin-containing compound metabolism; bacteriochlorophyll biosynthesis (light-independent). Functionally, converts Mg-protoporphyrin IX to Mg-protoporphyrin IX methylester using S-adenosyl-L-methionine as a cofactor. This chain is Magnesium-protoporphyrin O-methyltransferase (bchM), found in Rhodobacter capsulatus (Rhodopseudomonas capsulata).